The primary structure comprises 427 residues: Alpha/beta hydrolase gkaG (427 aa).

Residue D368 is part of the active site.

The protein belongs to the AB hydrolase superfamily. As to quaternary structure, homodimer.

Its pathway is mycotoxin biosynthesis. Its function is as follows. Alpha/beta hydrolase; part of the gene cluster that mediates the biosynthesis of GKK1032, fungal natural products containing a macrocyclic para-cyclophane connected to a decahydrofluorene ring system that show potent antitumor activities. Within the pathway, gkaG catalyzes the Knoevenagel condensation that affords the 3-pyrrolin-2-one ring, using as substrate the polyketide-tyrosyl acyl thioester product of gkaA. The pathway begins with the PKS-NRPS gkaA which, with the help of the trans-enoyl reductase gkaC, synthesizes the polyketide-tyrosyl acyl thioester product which can be reductively off-loaded by the terminal reductase (R) domain in gkaA. The alpha/beta hydrolase gkaG is then required to catalyze the subsequent Knoevenagel condensation that affords the 3-pyrrolin-2-one ring, whereas the three proteins gkaB, gkaX and gkaZ then function synergistically to form the cyclophane. This Penicillium citrinum protein is Alpha/beta hydrolase gkaG.